The sequence spans 452 residues: Pup--protein ligase 1 (452 aa).

E9 contacts Mg(2+). Residue R53 participates in ATP binding. Y55 provides a ligand contact to Mg(2+). The active-site Proton acceptor is the D57. E63 provides a ligand contact to Mg(2+). Residues T66 and W419 each coordinate ATP.

This sequence belongs to the Pup ligase/Pup deamidase family. Pup-conjugating enzyme subfamily.

The catalysed reaction is ATP + [prokaryotic ubiquitin-like protein]-L-glutamate + [protein]-L-lysine = ADP + phosphate + N(6)-([prokaryotic ubiquitin-like protein]-gamma-L-glutamyl)-[protein]-L-lysine.. It participates in protein degradation; proteasomal Pup-dependent pathway. Its pathway is protein modification; protein pupylation. Its function is as follows. Catalyzes the covalent attachment of the prokaryotic ubiquitin-like protein modifier Pup to the proteasomal substrate proteins, thereby targeting them for proteasomal degradation. This tagging system is termed pupylation. The ligation reaction involves the side-chain carboxylate of the C-terminal glutamate of Pup and the side-chain amino group of a substrate lysine. The chain is Pup--protein ligase 1 from Rhodococcus erythropolis (Arthrobacter picolinophilus).